The following is a 201-amino-acid chain: METRALSVNLREVKKNGAAKLRQQGMVPAVVYHKGEETVAISVDEIALDKLVHSAESHLIDLQYPDGKSVRAFIKDLQFDPVTDRVIHADFKRFTADEVVEMEVPIHVEGEAVGVKIGGGKLQINMHTLTLKGKPANMPEHFTIDVSALETGHSLHISDLQATVPAGTIEIIGDADAAIVSVAAPRKEAEAEAEEETTEEA.

The protein belongs to the bacterial ribosomal protein bL25 family. CTC subfamily. In terms of assembly, part of the 50S ribosomal subunit; part of the 5S rRNA/L5/L18/L25 subcomplex. Contacts the 5S rRNA. Binds to the 5S rRNA independently of L5 and L18.

In terms of biological role, this is one of the proteins that binds to the 5S RNA in the ribosome where it forms part of the central protuberance. The polypeptide is Large ribosomal subunit protein bL25 (Chlorobaculum parvum (strain DSM 263 / NCIMB 8327) (Chlorobium vibrioforme subsp. thiosulfatophilum)).